The sequence spans 181 residues: Adenine phosphoribosyltransferase (181 aa).

This sequence belongs to the purine/pyrimidine phosphoribosyltransferase family. As to quaternary structure, homodimer.

The protein resides in the cytoplasm. It catalyses the reaction AMP + diphosphate = 5-phospho-alpha-D-ribose 1-diphosphate + adenine. It functions in the pathway purine metabolism; AMP biosynthesis via salvage pathway; AMP from adenine: step 1/1. In terms of biological role, catalyzes a salvage reaction resulting in the formation of AMP, that is energically less costly than de novo synthesis. This chain is Adenine phosphoribosyltransferase, found in Brucella anthropi (strain ATCC 49188 / DSM 6882 / CCUG 24695 / JCM 21032 / LMG 3331 / NBRC 15819 / NCTC 12168 / Alc 37) (Ochrobactrum anthropi).